The primary structure comprises 171 residues: 3-hydroxydecanoyl-[acyl-carrier-protein] dehydratase (171 aa).

H70 is an active-site residue.

Belongs to the thioester dehydratase family. FabA subfamily. In terms of assembly, homodimer.

The protein localises to the cytoplasm. The catalysed reaction is a (3R)-hydroxyacyl-[ACP] = a (2E)-enoyl-[ACP] + H2O. It catalyses the reaction (3R)-hydroxydecanoyl-[ACP] = (2E)-decenoyl-[ACP] + H2O. It carries out the reaction (2E)-decenoyl-[ACP] = (3Z)-decenoyl-[ACP]. Its pathway is lipid metabolism; fatty acid biosynthesis. In terms of biological role, necessary for the introduction of cis unsaturation into fatty acids. Catalyzes the dehydration of (3R)-3-hydroxydecanoyl-ACP to E-(2)-decenoyl-ACP and then its isomerization to Z-(3)-decenoyl-ACP. Can catalyze the dehydratase reaction for beta-hydroxyacyl-ACPs with saturated chain lengths up to 16:0, being most active on intermediate chain length. This Pseudomonas putida (strain W619) protein is 3-hydroxydecanoyl-[acyl-carrier-protein] dehydratase.